Reading from the N-terminus, the 621-residue chain is Proton pump-interactor BIP131 (621 aa).

The stretch at 250–305 forms a coiled coil; it reads IDEVKRDRQAVRDKIKVLEDQIHAVDGEIAALQDDLTAATARKDKAFEALNELRKT. Residues 374 to 387 show a composition bias toward basic and acidic residues; the sequence is SRDGRMRNPDEKPI. Residues 374-572 form a disordered region; sequence SRDGRMRNPD…RSTVTKTKTP (199 aa). Residues 430–441 show a composition bias toward low complexity; the sequence is KAPAKAAKAKQP. Basic and acidic residues predominate over residues 448-516; sequence PDVHDDEPPK…AEKKLKEKEK (69 aa). Residues 466 to 524 adopt a coiled-coil conformation; it reads EAKLKEMKRQEEIEKNKLALERKKKQAEKQAMKAAARAEKEAEKKLKEKEKKARKRSAT. A helical membrane pass occupies residues 589-609; it reads WGAPMAALAAALVALLGALVY.

This sequence belongs to the plant proton pump-interactor protein family. In terms of assembly, interacts with BRI1.

The protein localises to the cell membrane. May regulate plasma membrane ATPase activity. The chain is Proton pump-interactor BIP131 from Oryza sativa subsp. japonica (Rice).